Here is a 501-residue protein sequence, read N- to C-terminus: ATP synthase subunit alpha (501 aa).

Gly169–Thr176 is a binding site for ATP.

It belongs to the ATPase alpha/beta chains family. As to quaternary structure, F-type ATPases have 2 components, CF(1) - the catalytic core - and CF(0) - the membrane proton channel. CF(1) has five subunits: alpha(3), beta(3), gamma(1), delta(1), epsilon(1). CF(0) has three main subunits: a(1), b(2) and c(9-12). The alpha and beta chains form an alternating ring which encloses part of the gamma chain. CF(1) is attached to CF(0) by a central stalk formed by the gamma and epsilon chains, while a peripheral stalk is formed by the delta and b chains.

It localises to the cell inner membrane. It catalyses the reaction ATP + H2O + 4 H(+)(in) = ADP + phosphate + 5 H(+)(out). In terms of biological role, produces ATP from ADP in the presence of a proton gradient across the membrane. The alpha chain is a regulatory subunit. The sequence is that of ATP synthase subunit alpha from Campylobacter jejuni subsp. jejuni serotype O:6 (strain 81116 / NCTC 11828).